Here is a 155-residue protein sequence, read N- to C-terminus: D-aminoacyl-tRNA deacylase (155 aa).

A Gly-cisPro motif, important for rejection of L-amino acids motif is present at residues 137–138 (GP).

Belongs to the DTD family. In terms of assembly, homodimer.

Its subcellular location is the cytoplasm. It catalyses the reaction glycyl-tRNA(Ala) + H2O = tRNA(Ala) + glycine + H(+). It carries out the reaction a D-aminoacyl-tRNA + H2O = a tRNA + a D-alpha-amino acid + H(+). Functionally, an aminoacyl-tRNA editing enzyme that deacylates mischarged D-aminoacyl-tRNAs. Also deacylates mischarged glycyl-tRNA(Ala), protecting cells against glycine mischarging by AlaRS. Acts via tRNA-based rather than protein-based catalysis; rejects L-amino acids rather than detecting D-amino acids in the active site. By recycling D-aminoacyl-tRNA to D-amino acids and free tRNA molecules, this enzyme counteracts the toxicity associated with the formation of D-aminoacyl-tRNA entities in vivo and helps enforce protein L-homochirality. The protein is D-aminoacyl-tRNA deacylase of Roseiflexus sp. (strain RS-1).